A 77-amino-acid polypeptide reads, in one-letter code: U8-lycotoxin-Ls1l (77 aa).

A signal peptide spans 1 to 20 (MKLMIFTGLVLFAIVSLIEA). The propeptide occupies 21–26 (QAENEK).

It belongs to the neurotoxin 19 (CSTX) family. 08 (U8-Lctx) subfamily. Post-translationally, contains 4 disulfide bonds. As to expression, expressed by the venom gland.

It localises to the secreted. The polypeptide is U8-lycotoxin-Ls1l (Lycosa singoriensis (Wolf spider)).